Consider the following 431-residue polypeptide: 3-phosphoshikimate 1-carboxyvinyltransferase (431 aa).

3-phosphoshikimate is bound by residues K23, S24, and R28. Phosphoenolpyruvate is bound at residue K23. Residues G96 and R124 each coordinate phosphoenolpyruvate. The 3-phosphoshikimate site is built by S169, Q171, D317, and K344. Q171 lines the phosphoenolpyruvate pocket. D317 functions as the Proton acceptor in the catalytic mechanism. Residues R348 and R390 each contribute to the phosphoenolpyruvate site.

This sequence belongs to the EPSP synthase family. In terms of assembly, monomer.

The protein localises to the cytoplasm. It catalyses the reaction 3-phosphoshikimate + phosphoenolpyruvate = 5-O-(1-carboxyvinyl)-3-phosphoshikimate + phosphate. It functions in the pathway metabolic intermediate biosynthesis; chorismate biosynthesis; chorismate from D-erythrose 4-phosphate and phosphoenolpyruvate: step 6/7. Catalyzes the transfer of the enolpyruvyl moiety of phosphoenolpyruvate (PEP) to the 5-hydroxyl of shikimate-3-phosphate (S3P) to produce enolpyruvyl shikimate-3-phosphate and inorganic phosphate. In Syntrophotalea carbinolica (strain DSM 2380 / NBRC 103641 / GraBd1) (Pelobacter carbinolicus), this protein is 3-phosphoshikimate 1-carboxyvinyltransferase.